The chain runs to 345 residues: Phosphoribosylformylglycinamidine cyclo-ligase (345 aa).

The protein belongs to the AIR synthase family.

Its subcellular location is the cytoplasm. The enzyme catalyses 2-formamido-N(1)-(5-O-phospho-beta-D-ribosyl)acetamidine + ATP = 5-amino-1-(5-phospho-beta-D-ribosyl)imidazole + ADP + phosphate + H(+). It participates in purine metabolism; IMP biosynthesis via de novo pathway; 5-amino-1-(5-phospho-D-ribosyl)imidazole from N(2)-formyl-N(1)-(5-phospho-D-ribosyl)glycinamide: step 2/2. The chain is Phosphoribosylformylglycinamidine cyclo-ligase from Shewanella woodyi (strain ATCC 51908 / MS32).